A 389-amino-acid polypeptide reads, in one-letter code: Chalcone synthase 1A (389 aa).

C164 is a catalytic residue.

Belongs to the thiolase-like superfamily. Chalcone/stilbene synthases family.

It catalyses the reaction (E)-4-coumaroyl-CoA + 3 malonyl-CoA + 3 H(+) = 2',4,4',6'-tetrahydroxychalcone + 3 CO2 + 4 CoA. Its pathway is secondary metabolite biosynthesis; flavonoid biosynthesis. Functionally, the primary product of this enzyme is 4,2',4',6'-tetrahydroxychalcone (also termed naringenin-chalcone or chalcone) which can under specific conditions spontaneously isomerize into naringenin. This is Chalcone synthase 1A (CHS-1A) from Pisum sativum (Garden pea).